The sequence spans 214 residues: Mexicain (214 aa).

3 cysteine pairs are disulfide-bonded: Cys-22/Cys-63, Cys-56/Cys-95, and Cys-153/Cys-200. The active site involves Cys-25. Cys-25 is an E64 binding site. Catalysis depends on residues His-159 and Asn-175.

It belongs to the peptidase C1 family. In terms of tissue distribution, expressed in latex.

The protein localises to the secreted. In terms of biological role, cysteine protease. This is Mexicain from Jacaratia mexicana (Wild papaya).